Reading from the N-terminus, the 372-residue chain is NAD(P)H-quinone oxidoreductase subunit 1 (372 aa).

8 helical membrane-spanning segments follow: residues I27–V47, I97–V117, V128–M148, L176–V196, I204–L224, I266–V286, S308–L328, and F347–P367.

This sequence belongs to the complex I subunit 1 family. As to quaternary structure, NDH-1 is composed of at least 11 different subunits.

It localises to the cellular thylakoid membrane. The enzyme catalyses a plastoquinone + NADH + (n+1) H(+)(in) = a plastoquinol + NAD(+) + n H(+)(out). It carries out the reaction a plastoquinone + NADPH + (n+1) H(+)(in) = a plastoquinol + NADP(+) + n H(+)(out). In terms of biological role, NDH-1 shuttles electrons from an unknown electron donor, via FMN and iron-sulfur (Fe-S) centers, to quinones in the respiratory and/or the photosynthetic chain. The immediate electron acceptor for the enzyme in this species is believed to be plastoquinone. Couples the redox reaction to proton translocation, and thus conserves the redox energy in a proton gradient. The chain is NAD(P)H-quinone oxidoreductase subunit 1 from Prochlorococcus marinus (strain AS9601).